Here is a 273-residue protein sequence, read N- to C-terminus: Large ribosomal subunit protein uL2 (273 aa).

Disordered regions lie at residues Lys-28–His-53 and Arg-221–Lys-273. A compositionally biased stretch (low complexity) spans Lys-39–Arg-48.

It belongs to the universal ribosomal protein uL2 family. In terms of assembly, part of the 50S ribosomal subunit. Forms a bridge to the 30S subunit in the 70S ribosome.

Its function is as follows. One of the primary rRNA binding proteins. Required for association of the 30S and 50S subunits to form the 70S ribosome, for tRNA binding and peptide bond formation. It has been suggested to have peptidyltransferase activity; this is somewhat controversial. Makes several contacts with the 16S rRNA in the 70S ribosome. In Pectobacterium atrosepticum (strain SCRI 1043 / ATCC BAA-672) (Erwinia carotovora subsp. atroseptica), this protein is Large ribosomal subunit protein uL2.